Reading from the N-terminus, the 339-residue chain is Cathepsin B (339 aa).

The N-terminal stretch at 1–17 (MWQLWASLCCLLALADA) is a signal peptide. Positions 18–79 (RSRPSFHPLS…QRVMFTEDLK (62 aa)) are cleaved as a propeptide — activation peptide. Disulfide bonds link Cys-93–Cys-122, Cys-105–Cys-150, Cys-141–Cys-207, Cys-142–Cys-146, Cys-179–Cys-211, and Cys-187–Cys-198. Cys-108 is a catalytic residue. An N-linked (GlcNAc...) asparagine glycan is attached at Asn-192. At Lys-220 the chain carries N6-acetyllysine. Catalysis depends on residues His-278 and Asn-298. Positions 334–339 (QYWEKI) are excised as a propeptide.

The protein belongs to the peptidase C1 family. Dimer of a heavy chain and a light chain cross-linked by a disulfide bond. Interacts with SRPX2. Directly interacts with SHKBP1.

Its subcellular location is the lysosome. The protein localises to the melanosome. It is found in the secreted. It localises to the extracellular space. The protein resides in the apical cell membrane. It catalyses the reaction Hydrolysis of proteins with broad specificity for peptide bonds. Preferentially cleaves -Arg-Arg-|-Xaa bonds in small molecule substrates (thus differing from cathepsin L). In addition to being an endopeptidase, shows peptidyl-dipeptidase activity, liberating C-terminal dipeptides.. Its function is as follows. Thiol protease which is believed to participate in intracellular degradation and turnover of proteins. Cleaves matrix extracellular phosphoglycoprotein MEPE. Involved in the solubilization of cross-linked TG/thyroglobulin in the thyroid follicle lumen. Has also been implicated in tumor invasion and metastasis. This is Cathepsin B (CTSB) from Pongo abelii (Sumatran orangutan).